The following is a 234-amino-acid chain: Leucyl/phenylalanyl-tRNA--protein transferase (234 aa).

Belongs to the L/F-transferase family.

The protein resides in the cytoplasm. The enzyme catalyses N-terminal L-lysyl-[protein] + L-leucyl-tRNA(Leu) = N-terminal L-leucyl-L-lysyl-[protein] + tRNA(Leu) + H(+). It catalyses the reaction N-terminal L-arginyl-[protein] + L-leucyl-tRNA(Leu) = N-terminal L-leucyl-L-arginyl-[protein] + tRNA(Leu) + H(+). The catalysed reaction is L-phenylalanyl-tRNA(Phe) + an N-terminal L-alpha-aminoacyl-[protein] = an N-terminal L-phenylalanyl-L-alpha-aminoacyl-[protein] + tRNA(Phe). In terms of biological role, functions in the N-end rule pathway of protein degradation where it conjugates Leu, Phe and, less efficiently, Met from aminoacyl-tRNAs to the N-termini of proteins containing an N-terminal arginine or lysine. In Salmonella gallinarum (strain 287/91 / NCTC 13346), this protein is Leucyl/phenylalanyl-tRNA--protein transferase.